The primary structure comprises 489 residues: Ribonuclease G (489 aa).

The S1 motif domain maps to 39-128 (GNIYKGRVSR…LTTDITLPSR (90 aa)). Mg(2+) contacts are provided by D304 and D347.

This sequence belongs to the RNase E/G family. RNase G subfamily. As to quaternary structure, homodimer, in equilibrium with possible higher multimers. The cofactor is Mg(2+).

It localises to the cytoplasm. Functionally, an endonuclease that acts in the processing of the 5'-end of 16S rRNA and 23S rRNA. It prefers 5'-monophosphorylated substrates and cleaves single-stranded sites rich in A and U residues; contributes to tRNA processing and mRNA turnover. This chain is Ribonuclease G (rng), found in Escherichia coli O157:H7.